The chain runs to 409 residues: Outer membrane protein YopM (409 aa).

LRR repeat units follow at residues 72–91 (QAHE…ELPP), 92–113 (HLES…PQSL), 114–131 (KSLL…DLPP), 132–153 (LLEY…QNSS), 154–173 (FLKI…DLPP), 174–195 (SLEF…QNLP), 196–215 (FLTA…DLPL), 216–237 (SLES…QNLP), 238–257 (FLTT…DLPP), 258–279 (SLEA…PQSL), 280–297 (TFLD…ELPP), 298–317 (NLYY…DLPP), 318–339 (SLEE…PPRL), 340–357 (ERLI…ELPQ), and 358–379 (NLKQ…PESV). Ca(2+) contacts are provided by N246 and D266. Positions 307, 308, and 326 each coordinate Ca(2+).

This sequence belongs to the LRR-containing bacterial E3 ligase family. Homotetramer forming a hollow cylinder with an inner diameter of approximately 35 angstroms.

The protein localises to the cell outer membrane. It localises to the secreted. Effector proteins function to alter host cell physiology and promote bacterial survival in host tissues. This is Outer membrane protein YopM (yopM) from Yersinia pestis.